We begin with the raw amino-acid sequence, 426 residues long: Histidine--tRNA ligase (426 aa).

This sequence belongs to the class-II aminoacyl-tRNA synthetase family. In terms of assembly, homodimer.

The protein resides in the cytoplasm. It catalyses the reaction tRNA(His) + L-histidine + ATP = L-histidyl-tRNA(His) + AMP + diphosphate + H(+). In Streptococcus dysgalactiae subsp. equisimilis (Streptococcus equisimilis), this protein is Histidine--tRNA ligase (hisS).